A 401-amino-acid polypeptide reads, in one-letter code: Imidazolonepropionase (401 aa).

Fe(3+) is bound by residues H66 and H68. The Zn(2+) site is built by H66 and H68. 4-imidazolone-5-propanoate contacts are provided by R75, Y138, and H171. An N-formimidoyl-L-glutamate-binding site is contributed by Y138. Residue H236 participates in Fe(3+) binding. Position 236 (H236) interacts with Zn(2+). Q239 is a 4-imidazolone-5-propanoate binding site. Fe(3+) is bound at residue D311. Zn(2+) is bound at residue D311. N-formimidoyl-L-glutamate is bound by residues N313 and G315. T316 is a 4-imidazolone-5-propanoate binding site.

The protein belongs to the metallo-dependent hydrolases superfamily. HutI family. Requires Zn(2+) as cofactor. It depends on Fe(3+) as a cofactor.

It is found in the cytoplasm. It catalyses the reaction 4-imidazolone-5-propanoate + H2O = N-formimidoyl-L-glutamate. It functions in the pathway amino-acid degradation; L-histidine degradation into L-glutamate; N-formimidoyl-L-glutamate from L-histidine: step 3/3. Its function is as follows. Catalyzes the hydrolytic cleavage of the carbon-nitrogen bond in imidazolone-5-propanoate to yield N-formimidoyl-L-glutamate. It is the third step in the universal histidine degradation pathway. The sequence is that of Imidazolonepropionase from Pseudomonas savastanoi pv. phaseolicola (strain 1448A / Race 6) (Pseudomonas syringae pv. phaseolicola (strain 1448A / Race 6)).